The sequence spans 227 residues: Enolase-phosphatase E1 (227 aa).

The protein belongs to the HAD-like hydrolase superfamily. MasA/MtnC family. As to quaternary structure, monomer. The cofactor is Mg(2+).

The catalysed reaction is 5-methylsulfanyl-2,3-dioxopentyl phosphate + H2O = 1,2-dihydroxy-5-(methylsulfanyl)pent-1-en-3-one + phosphate. It functions in the pathway amino-acid biosynthesis; L-methionine biosynthesis via salvage pathway; L-methionine from S-methyl-5-thio-alpha-D-ribose 1-phosphate: step 3/6. The protein operates within amino-acid biosynthesis; L-methionine biosynthesis via salvage pathway; L-methionine from S-methyl-5-thio-alpha-D-ribose 1-phosphate: step 4/6. Its function is as follows. Bifunctional enzyme that catalyzes the enolization of 2,3-diketo-5-methylthiopentyl-1-phosphate (DK-MTP-1-P) into the intermediate 2-hydroxy-3-keto-5-methylthiopentenyl-1-phosphate (HK-MTPenyl-1-P), which is then dephosphorylated to form the acireductone 1,2-dihydroxy-3-keto-5-methylthiopentene (DHK-MTPene). The sequence is that of Enolase-phosphatase E1 from Azotobacter vinelandii (strain DJ / ATCC BAA-1303).